A 136-amino-acid chain; its full sequence is Holo-[acyl-carrier-protein] synthase (136 aa).

Asp-8 and Glu-58 together coordinate Mg(2+).

The protein belongs to the P-Pant transferase superfamily. AcpS family. Mg(2+) is required as a cofactor.

It localises to the cytoplasm. It carries out the reaction apo-[ACP] + CoA = holo-[ACP] + adenosine 3',5'-bisphosphate + H(+). In terms of biological role, transfers the 4'-phosphopantetheine moiety from coenzyme A to a Ser of acyl-carrier-protein. This Leuconostoc mesenteroides subsp. mesenteroides (strain ATCC 8293 / DSM 20343 / BCRC 11652 / CCM 1803 / JCM 6124 / NCDO 523 / NBRC 100496 / NCIMB 8023 / NCTC 12954 / NRRL B-1118 / 37Y) protein is Holo-[acyl-carrier-protein] synthase.